A 759-amino-acid chain; its full sequence is 1,4-alpha-glucan branching enzyme GlgB (759 aa).

Aspartate 431 serves as the catalytic Nucleophile. Catalysis depends on glutamate 484, which acts as the Proton donor.

The protein belongs to the glycosyl hydrolase 13 family. GlgB subfamily. In terms of assembly, monomer.

The enzyme catalyses Transfers a segment of a (1-&gt;4)-alpha-D-glucan chain to a primary hydroxy group in a similar glucan chain.. It participates in glycan biosynthesis; glycogen biosynthesis. Catalyzes the formation of the alpha-1,6-glucosidic linkages in glycogen by scission of a 1,4-alpha-linked oligosaccharide from growing alpha-1,4-glucan chains and the subsequent attachment of the oligosaccharide to the alpha-1,6 position. The protein is 1,4-alpha-glucan branching enzyme GlgB of Prochlorococcus marinus (strain MIT 9211).